The primary structure comprises 204 residues: Recombination protein RecR (204 aa).

The C4-type zinc-finger motif lies at 58–75 (CSVCQNITDLGVDPCHIC). A Toprim domain is found at 83-181 (SVICVVESPT…NVTRIARGIP (99 aa)).

Belongs to the RecR family.

In terms of biological role, may play a role in DNA repair. It seems to be involved in an RecBC-independent recombinational process of DNA repair. It may act with RecF and RecO. The polypeptide is Recombination protein RecR (Chlorobaculum tepidum (strain ATCC 49652 / DSM 12025 / NBRC 103806 / TLS) (Chlorobium tepidum)).